Here is a 140-residue protein sequence, read N- to C-terminus: ATP synthase epsilon chain (140 aa).

This sequence belongs to the ATPase epsilon chain family. F-type ATPases have 2 components, CF(1) - the catalytic core - and CF(0) - the membrane proton channel. CF(1) has five subunits: alpha(3), beta(3), gamma(1), delta(1), epsilon(1). CF(0) has three main subunits: a, b and c.

The protein localises to the cell inner membrane. Its function is as follows. Produces ATP from ADP in the presence of a proton gradient across the membrane. The protein is ATP synthase epsilon chain of Neisseria meningitidis serogroup A / serotype 4A (strain DSM 15465 / Z2491).